Consider the following 254-residue polypeptide: 2,3-bisphosphoglycerate-dependent phosphoglycerate mutase (254 aa).

Residues 15 to 22, 28 to 29, Arg-67, 94 to 97, Lys-105, 121 to 122, and 188 to 189 each bind substrate; these read RHGQSEWN, TG, ERHY, RR, and GN. His-16 acts as the Tele-phosphohistidine intermediate in catalysis. The active-site Proton donor/acceptor is the Glu-94.

Belongs to the phosphoglycerate mutase family. BPG-dependent PGAM subfamily.

It catalyses the reaction (2R)-2-phosphoglycerate = (2R)-3-phosphoglycerate. It participates in carbohydrate degradation; glycolysis; pyruvate from D-glyceraldehyde 3-phosphate: step 3/5. Functionally, catalyzes the interconversion of 2-phosphoglycerate and 3-phosphoglycerate. The chain is 2,3-bisphosphoglycerate-dependent phosphoglycerate mutase from Corynebacterium jeikeium (strain K411).